A 553-amino-acid polypeptide reads, in one-letter code: Arginine--tRNA ligase (553 aa).

A 'HIGH' region motif is present at residues 130–140; it reads ANPTGDLHIGH.

This sequence belongs to the class-I aminoacyl-tRNA synthetase family. As to quaternary structure, monomer.

Its subcellular location is the cytoplasm. The catalysed reaction is tRNA(Arg) + L-arginine + ATP = L-arginyl-tRNA(Arg) + AMP + diphosphate. The chain is Arginine--tRNA ligase from Staphylococcus epidermidis (strain ATCC 35984 / DSM 28319 / BCRC 17069 / CCUG 31568 / BM 3577 / RP62A).